A 164-amino-acid chain; its full sequence is Nucleotide-binding protein Daro_3028 (164 aa).

The protein belongs to the YajQ family.

Its function is as follows. Nucleotide-binding protein. This Dechloromonas aromatica (strain RCB) protein is Nucleotide-binding protein Daro_3028.